The sequence spans 368 residues: Galactoside 2-alpha-L-fucosyltransferase SEC1 (368 aa).

The tract at residues 1-20 (MWDMRAVAPQRPAAGHPRAG) is disordered. Over 1 to 31 (MWDMRAVAPQRPAAGHPRAGWPRKLKTAATR) the chain is Cytoplasmic. The chain crosses the membrane as a helical span at residues 32-52 (FWATCPSSSTVCFLFVIFAVS). Topologically, residues 53–368 (TVFHCHRRLA…NLGQARESHP (316 aa)) are lumenal.

It belongs to the glycosyltransferase 11 family. In terms of tissue distribution, kidney.

Its subcellular location is the golgi apparatus. The protein localises to the golgi stack membrane. It carries out the reaction a ganglioside GM1 + GDP-beta-L-fucose = a ganglioside Fuc-GM1 + GDP + H(+). It participates in protein modification; protein glycosylation. Its function is as follows. Catalyzes the transfer of alpha 1,2-linked fucose to ganglioside GM1 and galacto-N-biose. The polypeptide is Galactoside 2-alpha-L-fucosyltransferase SEC1 (Bos taurus (Bovine)).